A 921-amino-acid chain; its full sequence is Isoleucine--tRNA ligase (921 aa).

The 'HIGH' region motif lies at 57-67 (PYANGDIHMGH). Residue E552 participates in L-isoleucyl-5'-AMP binding. The 'KMSKS' region signature appears at 593-597 (KMSKS). K596 is an ATP binding site. Positions 888, 891, 908, and 911 each coordinate Zn(2+).

Belongs to the class-I aminoacyl-tRNA synthetase family. IleS type 1 subfamily. As to quaternary structure, monomer. Requires Zn(2+) as cofactor.

The protein localises to the cytoplasm. The catalysed reaction is tRNA(Ile) + L-isoleucine + ATP = L-isoleucyl-tRNA(Ile) + AMP + diphosphate. In terms of biological role, catalyzes the attachment of isoleucine to tRNA(Ile). As IleRS can inadvertently accommodate and process structurally similar amino acids such as valine, to avoid such errors it has two additional distinct tRNA(Ile)-dependent editing activities. One activity is designated as 'pretransfer' editing and involves the hydrolysis of activated Val-AMP. The other activity is designated 'posttransfer' editing and involves deacylation of mischarged Val-tRNA(Ile). The sequence is that of Isoleucine--tRNA ligase from Bacillus cereus (strain AH820).